Here is a 364-residue protein sequence, read N- to C-terminus: Leucine dehydrogenase (364 aa).

The active site involves Lys80. Residue 180–186 (GVGNVAY) coordinates NAD(+).

Belongs to the Glu/Leu/Phe/Val dehydrogenases family.

It catalyses the reaction L-leucine + NAD(+) + H2O = 4-methyl-2-oxopentanoate + NH4(+) + NADH + H(+). Its pathway is amino-acid degradation; L-leucine degradation; 4-methyl-2-oxopentanoate from L-leucine (dehydrogenase route): step 1/1. In terms of biological role, catalyzes the reversible deamination of L-leucine to 4-methyl-2-oxopentanoate. The chain is Leucine dehydrogenase (yqiT) from Bacillus subtilis (strain 168).